The primary structure comprises 462 residues: Cytochrome P450 20A1 (462 aa).

A helical membrane pass occupies residues 4–24 (FAIFAVTFLLALVGAVLYLYP). C409 is a heme binding site.

Belongs to the cytochrome P450 family. Heme serves as cofactor.

It is found in the membrane. The polypeptide is Cytochrome P450 20A1 (Cyp20a1) (Rattus norvegicus (Rat)).